The sequence spans 1463 residues: Secretory phospholipase A2 receptor (1463 aa).

The first 20 residues, 1–20, serve as a signal peptide directing secretion; it reads MPLLSLSLLLLLLQVPAGSA. The Extracellular segment spans residues 21–1392; the sequence is ETAAWAVTPE…IHTVKKHPGK (1372 aa). The region spanning 38-115 is the Ricin B-type lectin domain; that stretch reads KGIFIIQSEN…CDSTHVSLKW (78 aa). Asparagine 93 is a glycosylation site (N-linked (GlcNAc...) asparagine). One can recognise a Fibronectin type-II domain in the interval 173 to 221; that stretch reads AHGTPCMFPFQYNQQWHHECTREGREDNLLWCATTSRYERDEKWGFCPD. Cystine bridges form between cysteine 178–cysteine 204, cysteine 192–cysteine 219, cysteine 260–cysteine 354, cysteine 330–cysteine 346, cysteine 406–cysteine 501, cysteine 478–cysteine 493, cysteine 617–cysteine 634, cysteine 699–cysteine 796, cysteine 774–cysteine 788, cysteine 840–cysteine 938, cysteine 915–cysteine 930, cysteine 992–cysteine 1096, cysteine 1068–cysteine 1088, cysteine 1209–cysteine 1223, cysteine 1280–cysteine 1377, and cysteine 1354–cysteine 1369. C-type lectin domains follow at residues 229-353, 357-500, 504-641, 646-795, 799-937, 941-1095, 1099-1230, and 1235-1376; these read CDAV…LPYV, YLNP…LFYL, TGLV…KAMS, PVEN…REWI, PRDV…MPSI, KKVW…YGFV, MQDA…LQGA, and PTET…KGFI. Residue asparagine 454 is glycosylated (N-linked (GlcNAc...) asparagine). Asparagine 1057 carries an N-linked (GlcNAc...) asparagine glycan. Residues 1393-1421 traverse the membrane as a helical segment; that stretch reads GPSHSVIPLTVALTLLVILAISTLSFCMY. At 1422-1463 the chain is on the cytoplasmic side; sequence KHSHIIFGRLAQFRNPYYPSANFSTVHLEENILISDLEKNDQ. The Endocytosis signal motif lies at 1436 to 1442; that stretch reads NPYYPSA.

As to quaternary structure, interacts with sPLA2-IB/PLA2G1B; this interaction mediates intracellular signaling as well as clearance of extracellular sPLA2-IB/PLA2G1B via endocytotic pathway. Interacts with sPLA2-X/PLA2G10; this interaction mediates sPLA2-X/PLA2G10 clearance and inactivation. Post-translationally, the secretory phospholipase A2 receptor form may be produced by the action of metalloproteinases. It contains all extracellular domains and only lacks transmembrane and cytosolic regions. It is however unclear whether this form is produced by proteolytic cleavage as suggested by some experiments, or by alternative splicing.

Its subcellular location is the cell membrane. The protein localises to the secreted. In terms of biological role, receptor for secretory phospholipase A2 (sPLA2). Also able to bind to snake PA2-like toxins. Although its precise function remains unclear, binding of sPLA2 to its receptor participates in both positive and negative regulation of sPLA2 functions as well as clearance of sPLA2. Binding of sPLA2-IB/PLA2G1B induces various effects depending on the cell type, such as activation of the mitogen-activated protein kinase (MAPK) cascade to induce cell proliferation, the production of lipid mediators, selective release of arachidonic acid in bone marrow-derived mast cells. In neutrophils, binding of sPLA2-IB/PLA2G1B can activate p38 MAPK to stimulate elastase release and cell adhesion. May be involved in responses in pro-inflammatory cytokine productions during endotoxic shock. Also has endocytic properties and rapidly internalizes sPLA2 ligands, which is particularly important for the clearance of extracellular sPLA2s to protect their potent enzymatic activities. The soluble secretory phospholipase A2 receptor form is circulating and acts as a negative regulator of sPLA2 functions by blocking the biological functions of sPLA2-IB/PLA2G1B and sPLA2-X/PLA2G10. The chain is Secretory phospholipase A2 receptor (PLA2R1) from Bos taurus (Bovine).